The primary structure comprises 217 residues: Large ribosomal subunit protein uL3 (217 aa).

This sequence belongs to the universal ribosomal protein uL3 family. Part of the 50S ribosomal subunit. Forms a cluster with proteins L14 and L19.

Its function is as follows. One of the primary rRNA binding proteins, it binds directly near the 3'-end of the 23S rRNA, where it nucleates assembly of the 50S subunit. The sequence is that of Large ribosomal subunit protein uL3 from Mycolicibacterium smegmatis (strain ATCC 700084 / mc(2)155) (Mycobacterium smegmatis).